We begin with the raw amino-acid sequence, 318 residues long: MAVGPPDQIFKDNLTFDTFRELIIEKESTADEVADKVLEAKKALLPIRTLMTEFVGMIANLESMGNKTSQEKFLAIRMKLIELQNNIQKFSKDFQQLQPVMRTMDKFNEEVNAGEKKFFVQETLGYTQLASNGSAAGITKTSSGNDGNTTGSTANTMAMAKGLKKNAAGKPNTGTGVQSGPGRRNSTKKTGHTGPATAPTTSNSAASAAAAAANTPSLKQIPNTQPMQLMPGVSPMAMASPLNNISPQRKLTQHVNQSRENSLHQGVTPSASMITPQNILNMSAFDLNQNQTPQSLDNVNNMDLTNLDLDSLNMEFLN.

Residues 134–156 (SAAGITKTSSGNDGNTTGSTANT) are compositionally biased toward polar residues. A disordered region spans residues 134–225 (SAAGITKTSS…PSLKQIPNTQ (92 aa)). Over residues 192–217 (HTGPATAPTTSNSAASAAAAAANTPS) the composition is skewed to low complexity.

It belongs to the Mediator complex subunit 3 family. In terms of assembly, component of the Mediator complex.

The protein resides in the nucleus. Component of the Mediator complex, a coactivator involved in regulated gene transcription of nearly all RNA polymerase II-dependent genes. Mediator functions as a bridge to convey information from gene-specific regulatory proteins to the basal RNA polymerase II transcription machinery. Mediator is recruited to promoters by direct interactions with regulatory proteins and serves as a scaffold for the assembly of a functional preinitiation complex with RNA polymerase II and the general transcription factors. This is Mediator of RNA polymerase II transcription subunit 3 (PGD1) from Kluyveromyces lactis (strain ATCC 8585 / CBS 2359 / DSM 70799 / NBRC 1267 / NRRL Y-1140 / WM37) (Yeast).